Reading from the N-terminus, the 88-residue chain is Acylphosphatase (88 aa).

Residues 3-88 (AARFIFTGVV…IPTTEAFVTG (86 aa)) form the Acylphosphatase-like domain. Residues Arg-18 and Asn-36 contribute to the active site.

This sequence belongs to the acylphosphatase family.

It carries out the reaction an acyl phosphate + H2O = a carboxylate + phosphate + H(+). The chain is Acylphosphatase (acyP) from Xanthomonas campestris pv. campestris (strain 8004).